Reading from the N-terminus, the 365-residue chain is Oligosaccharides import ATP-binding protein MsmX (365 aa).

Residues 4–235 (LRMEHIYKFY…PENVFVGGFI (232 aa)) enclose the ABC transporter domain. Position 37-44 (37-44 (GPSGCGKS)) interacts with ATP.

This sequence belongs to the ABC transporter superfamily. As to quaternary structure, the complex involved in maltodextrin import is composed of two ATP-binding proteins (MsmX), two transmembrane proteins (MdxF and MdxG) and a solute-binding protein (MdxE). The complex involved in arabinooligosaccharides uptake is composed of two ATP-binding proteins (MsmX), two transmembrane proteins (AraP and AraQ) and a solute-binding protein (AraN). The complex involved in galactooligosaccharides uptake is composed of two ATP-binding proteins (MsmX), two transmembrane proteins (GanP and GanQ) and a solute-binding protein (GanS). The complex involved in melibiose, raffinose and stachyose import is composed of two ATP-binding proteins (MsmX), two transmembrane proteins (MelC and MelD) and a solute-binding protein (MelE). The complex involved in polygalacturonan and rhamnogalacturonan type I uptake is probably composed of two ATP-binding proteins (MsmX), two transmembrane proteins (YtcP and YteP) and a solute-binding protein (YtcQ).

The protein localises to the cell membrane. Functionally, required to energize different ABC-type saccharide transporters. Part of the MdxEFG-MsmX ABC transporter complex involved in maltodextrin import, of the AraNPQ-MsmX complex involved in arabinooligosaccharides import, of the GanPQS-MsmX complex involved in galactooligosaccharides import, and of the MelEDC-MsmX complex involved in melibiose, raffinose and stachyose import. Is probably also part of the ABC transporter complex YtcQP-YteP-MsmX involved in polygalacturonan and rhamnogalacturonan type I import during pectin degradation. Responsible for energy coupling to the transport system. This is Oligosaccharides import ATP-binding protein MsmX (msmX) from Bacillus subtilis (strain 168).